The sequence spans 100 residues: Small ribosomal subunit protein uS14c (100 aa).

The protein belongs to the universal ribosomal protein uS14 family. As to quaternary structure, part of the 30S ribosomal subunit.

The protein resides in the plastid. It localises to the chloroplast. Its function is as follows. Binds 16S rRNA, required for the assembly of 30S particles. The polypeptide is Small ribosomal subunit protein uS14c (Bigelowiella natans (Pedinomonas minutissima)).